A 190-amino-acid polypeptide reads, in one-letter code: Xanthine phosphoribosyltransferase (190 aa).

Xanthine-binding residues include L20 and N27. 128–132 (ANGNA) provides a ligand contact to 5-phospho-alpha-D-ribose 1-diphosphate. Xanthine is bound at residue K156.

It belongs to the purine/pyrimidine phosphoribosyltransferase family. Xpt subfamily. Homodimer.

It localises to the cytoplasm. It carries out the reaction XMP + diphosphate = xanthine + 5-phospho-alpha-D-ribose 1-diphosphate. Its pathway is purine metabolism; XMP biosynthesis via salvage pathway; XMP from xanthine: step 1/1. Functionally, converts the preformed base xanthine, a product of nucleic acid breakdown, to xanthosine 5'-monophosphate (XMP), so it can be reused for RNA or DNA synthesis. The chain is Xanthine phosphoribosyltransferase from Clostridium novyi (strain NT).